We begin with the raw amino-acid sequence, 650 residues long: 1-deoxy-D-xylulose-5-phosphate synthase (650 aa).

Residues His73 and 113–115 each bind thiamine diphosphate; that span reads SHA. Residue Asp145 participates in Mg(2+) binding. Residues 146–147, Asn175, Tyr287, and Glu369 each bind thiamine diphosphate; that span reads GA. Asn175 contacts Mg(2+).

Belongs to the transketolase family. DXPS subfamily. As to quaternary structure, homodimer. Mg(2+) is required as a cofactor. The cofactor is thiamine diphosphate.

It catalyses the reaction D-glyceraldehyde 3-phosphate + pyruvate + H(+) = 1-deoxy-D-xylulose 5-phosphate + CO2. Its pathway is metabolic intermediate biosynthesis; 1-deoxy-D-xylulose 5-phosphate biosynthesis; 1-deoxy-D-xylulose 5-phosphate from D-glyceraldehyde 3-phosphate and pyruvate: step 1/1. Functionally, catalyzes the acyloin condensation reaction between C atoms 2 and 3 of pyruvate and glyceraldehyde 3-phosphate to yield 1-deoxy-D-xylulose-5-phosphate (DXP). This chain is 1-deoxy-D-xylulose-5-phosphate synthase, found in Leifsonia xyli subsp. xyli (strain CTCB07).